The primary structure comprises 202 residues: MSWIENKFEKNFLLSSVDYVFNWARKSSVWPMTFGLACCAIEMITASTARYDIARFGSEVFRPSPRQSDLMIVAGTVTLKMAPVVQRIYEQMPEPKWVMAMGACASVGGPFNTYATLQGVDKIVPVDVYVVGCPPRPENLFYGLLKLQDKIDHMTLAKRPTDVRLDETMLDEFRKSVRIAQAGSTVVIQPAAPPVVPGLQTK.

Residues cysteine 38, cysteine 39, cysteine 104, and cysteine 133 each contribute to the [4Fe-4S] cluster site.

Belongs to the complex I 20 kDa subunit family. In terms of assembly, NDH-1 is composed of 14 different subunits. Subunits NuoB, C, D, E, F, and G constitute the peripheral sector of the complex. [4Fe-4S] cluster serves as cofactor.

Its subcellular location is the cell inner membrane. It catalyses the reaction a quinone + NADH + 5 H(+)(in) = a quinol + NAD(+) + 4 H(+)(out). Functionally, NDH-1 shuttles electrons from NADH, via FMN and iron-sulfur (Fe-S) centers, to quinones in the respiratory chain. The immediate electron acceptor for the enzyme in this species is believed to be ubiquinone. Couples the redox reaction to proton translocation (for every two electrons transferred, four hydrogen ions are translocated across the cytoplasmic membrane), and thus conserves the redox energy in a proton gradient. The sequence is that of NADH-quinone oxidoreductase subunit B 2 from Koribacter versatilis (strain Ellin345).